Consider the following 204-residue polypeptide: Allatotropin (204 aa).

An N-terminal signal peptide occupies residues 1-20; it reads MNLTMQLAVIVAVCLCLAEG. A propeptide spanning residues 21–35 is cleaved from the precursor; it reads APDVRLTRTKQQRPT. The tract at residues 47-83 is disordered; it reads RGFGKRDRPHPRAERDVDHQAPSARPNRGTPTFKSPT. A Phenylalanine amide modification is found at Phe-49. Residues 50 to 65 show a composition bias toward basic and acidic residues; it reads GKRDRPHPRAERDVDH. The propeptide occupies 53–204; it reads DRPHPRAERD…LSSEELLRNF (152 aa).

In terms of tissue distribution, expressed extensively in the brain, frontal ganglion and terminal ganglion of the day 2 fifth instar larva (at protein level). Not expressed in the larval brain after day 4 of the fifth instar, or in the brain of the pupa or adult. Expression in the terminal ganglion is localized to cells in the posterior portion of the seventh neuromere of day 2 fifth instar larvae. In the pupa and adult expression is detected in the medial region of neuromere 6, the dorsal medial region of neuromere 7, and the posterior neuromere of the terminal ganglion (at protein level). In the frontal ganglion expression decreases in the wandering larvae and is present at low levels in during pupal ecdysis, but is not detected in the adult. Expressed in the subesophageal ganglion of day 2 fifth instar larva, but not at any time before or after day 2. Not expressed in the abdominal ganglia 1-6 of the day 2 fifth instar larva (at protein level). Expressed in the anterior neuromeres of the pterothoracic ganglion in pupa but not in adult (at protein level). Expressed in the unfused abdominal ganglia of day 10 pupae, and in pharate adult is expressed in median neurosecretory cells M1, M2 and M5, but not in median neurosecretory cells M3 and M4 (at protein level). Not expressed in the differentiated median neurosecretory cells M5 of the larva (at protein level). In the pharate adult brain isoform 3 is the predominant form, with lower levels of isoform 2 and very low levels of isoform 1 detected. In the pharate adult nerve cord isoform 3 is the predominant form, with lower levels of isoform 2 and no isoform 1 detected. In the pharate adult frontal ganglion isoform 3 is expressed, but not isoform 1 and isoform 2.

The protein resides in the secreted. Its function is as follows. Neuropeptide stimulator of juvenile hormone synthesis. Cardioregulatory neurohormone that increases heart beat rate in the adult but not in the larva. Inhibits active ion transport in the midgut of feeding fourth instar and day 2 fifth instar larva, but not in the midgut of pharate or wandering fifth instar larva. The chain is Allatotropin from Manduca sexta (Tobacco hawkmoth).